Consider the following 500-residue polypeptide: Cytochrome P450 2D27 (500 aa).

Position 446 (cysteine 446) interacts with heme.

Belongs to the cytochrome P450 family. Requires heme as cofactor. As to expression, expressed in liver, but not in kidney, small intestine, and brain.

It localises to the endoplasmic reticulum membrane. The protein localises to the microsome membrane. Its function is as follows. Has bufuralol 1'-hydroxylase and debrisoquine 4-hydroxylase activities. This chain is Cytochrome P450 2D27 (CYP2D27), found in Mesocricetus auratus (Golden hamster).